The primary structure comprises 429 residues: MPNQDILDLQPAHIRELQNRYERAMADHGYDSLLIASGAAPYRYRDDQAYVFQGFGPFLHWTGLAGQEHSWLLVRPGQKPVLWLYQPVDFWHANPVMAEEPWLEVVDVRSRQQSGAPELDSPGRLVVIGDPLVLDGVPGDHNPAALVAAVEEARVRKTPYEIECLAHANRIALAGHRAAREAFLAGDSEFGINLAYQQATGQREVEAPYHSIIGLNEHAGTLHYQYYDLKPPRRPRSLLIDAGVRYRGYCSDITRTTAGPDEPRFTALVHGLEKLQLRLCEMVSPGVDYVDIHRKAHLGIATLLSASGLVSGLADEAMVEQGITRAFFPHGIGHFLGIQVHDVAGKPTPSPEDAPFLRLTRTLEAGMVVTIEPGLYFIPSLLEPLLNGPEAQYLNRALIDELKSCGGIRIEDNVVVTAAGARNLTRECE.

5 residues coordinate Mn(2+): aspartate 241, aspartate 252, histidine 334, glutamate 372, and glutamate 411.

It belongs to the peptidase M24B family. Bacterial-type prolidase subfamily. The cofactor is Mn(2+).

It catalyses the reaction Xaa-L-Pro dipeptide + H2O = an L-alpha-amino acid + L-proline. In terms of biological role, splits dipeptides with a prolyl residue in the C-terminal position. The protein is Xaa-Pro dipeptidase of Marinobacter nauticus (strain ATCC 700491 / DSM 11845 / VT8) (Marinobacter aquaeolei).